Reading from the N-terminus, the 757-residue chain is Kin of IRRE-like protein 1 (757 aa).

Positions 1-16 are cleaved as a signal peptide; it reads MLSLLVWILTLSDTFS. Residues 17 to 499 are Extracellular-facing; the sequence is QGTQTRFSQE…REVLPVGIIA (483 aa). Ig-like C2-type domains lie at 21-115, 120-216, 223-299, 308-387, and 392-488; these read TRFS…AKLT, PEDT…TSIE, PTVT…TNVS, PRIV…EVPL, and PPII…IQLE. Cysteines 42 and 100 form a disulfide. Residues Asn-46 and Asn-140 are each glycosylated (N-linked (GlcNAc...) asparagine). Cystine bridges form between Cys-143/Cys-200 and Cys-244/Cys-287. Asn-297 is a glycosylation site (N-linked (GlcNAc...) asparagine). A disulfide bridge connects residues Cys-329 and Cys-371. The Cell attachment site signature appears at 405–407; that stretch reads RGD. Cys-413 and Cys-472 are disulfide-bonded. Asn-471 carries an N-linked (GlcNAc...) asparagine glycan. The chain crosses the membrane as a helical span at residues 500–520; sequence GATIGASILLIFFFIALVFFL. At 521 to 757 the chain is on the cytoplasmic side; sequence YRRRKGSRKD…RFQQRMQTHV (237 aa). At Ser-574 the chain carries Phosphoserine. Tyr-605 and Tyr-606 each carry phosphotyrosine; by FYN. 2 positions are modified to phosphotyrosine: Tyr-622 and Tyr-625. Residues 649–679 are disordered; sequence QLNTYSRGPASDYGPEPTPPGPAAPAGTDTT. Tyr-724 carries the phosphotyrosine modification.

The protein belongs to the immunoglobulin superfamily. In terms of assembly, interacts with TJP1/ZO-1 and with NPHS2/podocin (via the C-terminus). Interacts with NPHS1/nephrin (via the Ig-like domains); this interaction is dependent on KIRREL1 glycosylation. Homodimer (via the Ig-like domains). Interacts when tyrosine-phosphorylated with GRB2. Post-translationally, phosphorylation probably regulates the interaction with NSH2. Phosphorylated at Tyr-605 and Tyr-606 by FYN, leading to GRB2 binding. N-glycosylated. In terms of tissue distribution, abundantly expressed in kidney. Specifically expressed in podocytes of kidney glomeruli.

It localises to the cell membrane. In terms of biological role, required for proper function of the glomerular filtration barrier. It is involved in the maintenance of a stable podocyte architecture with interdigitating foot processes connected by specialized cell-cell junctions, known as the slit diaphragm. It is a signaling protein that needs the presence of TEC kinases to fully trans-activate the transcription factor AP-1. The protein is Kin of IRRE-like protein 1 of Homo sapiens (Human).